Consider the following 99-residue polypeptide: Regulatory protein FanB (99 aa).

Trans-acting protein involved in the regulation of the biogenesis of K99 fimbriae (FanC). The polypeptide is Regulatory protein FanB (fanB) (Escherichia coli).